A 333-amino-acid polypeptide reads, in one-letter code: Phosphoribosylformylglycinamidine cyclo-ligase (333 aa).

The protein belongs to the AIR synthase family.

It is found in the cytoplasm. The catalysed reaction is 2-formamido-N(1)-(5-O-phospho-beta-D-ribosyl)acetamidine + ATP = 5-amino-1-(5-phospho-beta-D-ribosyl)imidazole + ADP + phosphate + H(+). The protein operates within purine metabolism; IMP biosynthesis via de novo pathway; 5-amino-1-(5-phospho-D-ribosyl)imidazole from N(2)-formyl-N(1)-(5-phospho-D-ribosyl)glycinamide: step 2/2. The protein is Phosphoribosylformylglycinamidine cyclo-ligase of Clostridium perfringens (strain 13 / Type A).